Reading from the N-terminus, the 203-residue chain is UPF0637 protein SSP1683 (203 aa).

Belongs to the UPF0637 family.

The protein is UPF0637 protein SSP1683 of Staphylococcus saprophyticus subsp. saprophyticus (strain ATCC 15305 / DSM 20229 / NCIMB 8711 / NCTC 7292 / S-41).